Here is a 563-residue protein sequence, read N- to C-terminus: Methylcrotonoyl-CoA carboxylase beta chain, mitochondrial (563 aa).

A mitochondrion-targeting transit peptide spans Met1–Ala22. The region spanning Met49–Pro306 is the CoA carboxyltransferase N-terminal domain. Positions Met49 to Arg555 are carboxyltransferase. At Lys70 the chain carries N6-acetyllysine; alternate. Lys70 is subject to N6-succinyllysine; alternate. Lys141 carries the post-translational modification N6-succinyllysine. In terms of domain architecture, CoA carboxyltransferase C-terminal spans Glu309–Arg555. The interval Arg343 to Asn372 is acyl-CoA binding. The residue at position 433 (Lys433) is an N6-succinyllysine. Lys495 bears the N6-acetyllysine; alternate mark. Lys495 carries the N6-succinyllysine; alternate modification. The residue at position 511 (Lys511) is an N6-acetyllysine.

It belongs to the AccD/PCCB family. Probably a dodecamer composed of six biotin-containing alpha subunits (MCCC1) and six beta (MCCC2) subunits.

The protein localises to the mitochondrion matrix. It carries out the reaction 3-methylbut-2-enoyl-CoA + hydrogencarbonate + ATP = 3-methyl-(2E)-glutaconyl-CoA + ADP + phosphate + H(+). It functions in the pathway amino-acid degradation; L-leucine degradation; (S)-3-hydroxy-3-methylglutaryl-CoA from 3-isovaleryl-CoA: step 2/3. Carboxyltransferase subunit of the 3-methylcrotonyl-CoA carboxylase, an enzyme that catalyzes the conversion of 3-methylcrotonyl-CoA to 3-methylglutaconyl-CoA, a critical step for leucine and isovaleric acid catabolism. This chain is Methylcrotonoyl-CoA carboxylase beta chain, mitochondrial (Mccc2), found in Rattus norvegicus (Rat).